The following is a 331-amino-acid chain: 6-phosphogluconolactonase (331 aa).

Lys-287 is subject to N6-acetyllysine.

This sequence belongs to the cycloisomerase 2 family.

The catalysed reaction is 6-phospho-D-glucono-1,5-lactone + H2O = 6-phospho-D-gluconate + H(+). The protein operates within carbohydrate degradation; pentose phosphate pathway; D-ribulose 5-phosphate from D-glucose 6-phosphate (oxidative stage): step 2/3. Functionally, catalyzes the hydrolysis of 6-phosphogluconolactone to 6-phosphogluconate. This Escherichia coli O8 (strain IAI1) protein is 6-phosphogluconolactonase.